Here is a 582-residue protein sequence, read N- to C-terminus: Phosphoribosylaminoimidazole carboxylase (582 aa).

Positions 114 to 305 (KKYLAEKGVA…QFENHLRAIL (192 aa)) constitute an ATP-grasp domain. Position 143–200 (143–200 (AGRLGLPLMLKAKTLAYDGRGNSPLKSTSSEDIQASLKFLGDRPLYAEGWAPFVKEVA)) interacts with ATP.

This sequence in the C-terminal section; belongs to the AIR carboxylase family. Class I subfamily.

The enzyme catalyses 5-amino-1-(5-phospho-D-ribosyl)imidazole-4-carboxylate + H(+) = 5-amino-1-(5-phospho-beta-D-ribosyl)imidazole + CO2. It participates in purine metabolism; IMP biosynthesis via de novo pathway; 5-amino-1-(5-phospho-D-ribosyl)imidazole-4-carboxylate from 5-amino-1-(5-phospho-D-ribosyl)imidazole (carboxylase route): step 1/1. This chain is Phosphoribosylaminoimidazole carboxylase (ADE2), found in Cryptococcus neoformans var. grubii serotype A (strain H99 / ATCC 208821 / CBS 10515 / FGSC 9487) (Filobasidiella neoformans var. grubii).